The primary structure comprises 195 residues: Probable GTP-binding protein EngB (195 aa).

Residues 22–195 (GLPEIALAGR…WGAIKKMISR (174 aa)) enclose the EngB-type G domain. Residues 30–37 (GRSNVGKS), 57–61 (GKTQT), 75–78 (DVPG), 142–145 (TKAD), and 174–176 (FSS) each bind GTP. Mg(2+) contacts are provided by Ser37 and Thr59.

It belongs to the TRAFAC class TrmE-Era-EngA-EngB-Septin-like GTPase superfamily. EngB GTPase family. Requires Mg(2+) as cofactor.

Its function is as follows. Necessary for normal cell division and for the maintenance of normal septation. This is Probable GTP-binding protein EngB from Bacillus velezensis (strain DSM 23117 / BGSC 10A6 / LMG 26770 / FZB42) (Bacillus amyloliquefaciens subsp. plantarum).